A 204-amino-acid polypeptide reads, in one-letter code: Guanylate kinase (204 aa).

The region spanning 18 to 196 is the Guanylate kinase-like domain; sequence PKLFTISAPA…SYEILKSIFI (179 aa). 25–32 is a binding site for ATP; that stretch reads APAGAGKT.

Belongs to the guanylate kinase family.

It localises to the cytoplasm. It catalyses the reaction GMP + ATP = GDP + ADP. In terms of biological role, essential for recycling GMP and indirectly, cGMP. The protein is Guanylate kinase of Chlamydia felis (strain Fe/C-56) (Chlamydophila felis).